The primary structure comprises 677 residues: Methionine--tRNA ligase (677 aa).

The 'HIGH' region motif lies at 15–25 (PYANGSIHLGH). The Zn(2+) site is built by cysteine 146, cysteine 149, cysteine 159, and cysteine 162. Residues 333 to 337 (KMSKS) carry the 'KMSKS' region motif. Lysine 336 provides a ligand contact to ATP. The region spanning 575 to 677 (DFAKVDLRVA…AGAKPGHQVK (103 aa)) is the tRNA-binding domain.

The protein belongs to the class-I aminoacyl-tRNA synthetase family. MetG type 1 subfamily. In terms of assembly, homodimer. The cofactor is Zn(2+).

The protein localises to the cytoplasm. It carries out the reaction tRNA(Met) + L-methionine + ATP = L-methionyl-tRNA(Met) + AMP + diphosphate. In terms of biological role, is required not only for elongation of protein synthesis but also for the initiation of all mRNA translation through initiator tRNA(fMet) aminoacylation. The sequence is that of Methionine--tRNA ligase from Shigella sonnei (strain Ss046).